A 255-amino-acid polypeptide reads, in one-letter code: NAD kinase (255 aa).

Aspartate 44 functions as the Proton acceptor in the catalytic mechanism. NAD(+)-binding positions include 44–45 (DG), histidine 49, 114–115 (NE), aspartate 144, alanine 152, 155–160 (SAYNLS), and glutamine 216.

Belongs to the NAD kinase family. Requires a divalent metal cation as cofactor.

It localises to the cytoplasm. It catalyses the reaction NAD(+) + ATP = ADP + NADP(+) + H(+). In terms of biological role, involved in the regulation of the intracellular balance of NAD and NADP, and is a key enzyme in the biosynthesis of NADP. Catalyzes specifically the phosphorylation on 2'-hydroxyl of the adenosine moiety of NAD to yield NADP. This Rickettsia conorii (strain ATCC VR-613 / Malish 7) protein is NAD kinase.